Reading from the N-terminus, the 440-residue chain is Protein ABHD8 (440 aa).

Positions 123 to 158 (DPAGSDGRSAPGSGSGSGSGSGSGGRRRRARRPKRT) are disordered. Positions 124-134 (PAGSDGRSAPG) are enriched in low complexity. The span at 135 to 146 (SGSGSGSGSGSG) shows a compositional bias: gly residues. The segment covering 147–158 (GRRRRARRPKRT) has biased composition (basic residues). The AB hydrolase-1 domain occupies 178–280 (VLFFIHGVGG…HKVIMINGGG (103 aa)). Active-site charge relay system residues include S253, D371, and H399.

The protein belongs to the AB hydrolase superfamily. In terms of assembly, interacts with NLRP3 (via NACHT and LLR domains); this interaction is enhanced in the presence of NLRP3 inflammasome inducers, such as ATP, nigericin, silica, or alum. Interacts with ZDHHC12.

The protein resides in the cytoplasm. In terms of biological role, negatively regulates NLRP3-driven inflammation. Promotes NLRP3 degradation through the chaperone-mediated autophagy (CMA) pathway, hence attenuating inflammasome activation and IL1B secretion. Acts by recruiting palmitoyltransferase ZDHHC12 to NLRP3, facilitating NLRP3 palmitoylation and subsequent degradation. This Macaca fascicularis (Crab-eating macaque) protein is Protein ABHD8.